The chain runs to 265 residues: UDP-N-acetylenolpyruvoylglucosamine reductase (265 aa).

Positions 15 to 169 (GVGGPAELWT…TRVRLKLKER (155 aa)) constitute an FAD-binding PCMH-type domain. Arg-149 is an active-site residue. A disordered region spans residues 182–203 (DRARKGQPKRKSAGCAFKNPPG). The active-site Proton donor is the Cys-196.

Belongs to the MurB family. FAD is required as a cofactor.

Its subcellular location is the cytoplasm. It carries out the reaction UDP-N-acetyl-alpha-D-muramate + NADP(+) = UDP-N-acetyl-3-O-(1-carboxyvinyl)-alpha-D-glucosamine + NADPH + H(+). The protein operates within cell wall biogenesis; peptidoglycan biosynthesis. Cell wall formation. In Thermus thermophilus (strain ATCC BAA-163 / DSM 7039 / HB27), this protein is UDP-N-acetylenolpyruvoylglucosamine reductase.